The sequence spans 485 residues: Keratin, type I cytoskeletal 14 (485 aa).

Positions Met-1–Lys-15 are enriched in polar residues. A disordered region spans residues Met-1–Gly-21. Residues Met-1 to Ser-121 are head. The segment at Glu-122–Trp-157 is coil 1A. The region spanning Glu-122 to Leu-433 is the IF rod domain. The segment at Tyr-158–Thr-175 is linker 1. A coil 1B region spans residues Ile-176 to Met-267. The segment at Arg-268–Ile-290 is linker 12. The tract at residues Leu-291–Glu-429 is coil 2. The tract at residues Asp-430–Asn-485 is tail. The tract at residues His-432–Asn-485 is interaction with Type I keratins and keratin filaments. Positions Gln-437–Ser-451 are enriched in low complexity. Residues Gln-437–Asn-458 are disordered. Ser-448 is modified (phosphoserine).

This sequence belongs to the intermediate filament family. In terms of assembly, heterotetramer of two type I and two type II keratins. Forms a disulfide-linked heterodimer (via 2B domains) with KRT5 (via 2B domains). Forms a heterodimer with KRT1; the interaction is more abundant in the absence of KRT5. Interacts with TRADD and with keratin filaments. Associates with other type I keratins. Interacts with EPPK1. Interacts with KLHL24. Interacts with PKP1 (via N-terminus) and PKP2. Post-translationally, a disulfide bond is formed between rather than within filaments and promotes the formation of a keratin filament cage around the nucleus. Ubiquitinated by the BCR(KLHL24) E3 ubiquitin ligase complex. As to expression, expressed in most cells of squamous cell carcinomas, in spinous and suprabasal cells around the branching papillary region of papillomas, and weakly in a few proliferative cells of hyperplastic tissue.

Its subcellular location is the cytoplasm. The protein localises to the nucleus. In terms of biological role, the nonhelical tail domain is involved in promoting KRT5-KRT14 filaments to self-organize into large bundles and enhances the mechanical properties involved in resilience of keratin intermediate filaments in vitro. This Rattus norvegicus (Rat) protein is Keratin, type I cytoskeletal 14 (Krt14).